Here is a 621-residue protein sequence, read N- to C-terminus: CEP295 N-terminal-like protein (621 aa).

Residues 142 to 253 are disordered; that stretch reads GGRARENEPD…RSKGADLERS (112 aa). Positions 159-170 are enriched in basic residues; it reads RSARPPRAKEKH. Basic and acidic residues predominate over residues 171–185; the sequence is RAALSEERSCREELG. Over residues 203–213 the composition is skewed to polar residues; sequence KPQTTKATGRM. Residues 219 to 229 show a composition bias toward basic and acidic residues; it reads PPEKRKGRPEP. Residues 328–359 adopt a coiled-coil conformation; sequence QCTLREKNKWQKELELAFEELFNINRKLKKHL. Disordered stretches follow at residues 385 to 421, 491 to 529, and 543 to 586; these read CGAGTPRGKKMADPEMLPAGEPRSPAEEEAQQAASKT, DQADRVGSTASRQRQKAEMEQRRQKQLESLEQMEHPDMS, and REQR…DRHS. The stretch at 498–525 forms a coiled coil; sequence STASRQRQKAEMEQRRQKQLESLEQMEH. A compositionally biased stretch (basic and acidic residues) spans 505–529; it reads QKAEMEQRRQKQLESLEQMEHPDMS. The span at 568-578 shows a compositional bias: polar residues; it reads ELSTTSPSGTS.

The protein resides in the cell projection. Its subcellular location is the cilium. The protein is CEP295 N-terminal-like protein of Homo sapiens (Human).